Here is a 255-residue protein sequence, read N- to C-terminus: uncharacterized protein (255 aa).

A signal peptide spans 1–23; sequence MKRLNKLVLGIIFLFLVISITAG. C24 carries the N-palmitoyl cysteine lipid modification. C24 carries S-diacylglycerol cysteine lipidation.

It belongs to the staphylococcal tandem lipoprotein family.

It localises to the cell membrane. This is an uncharacterized protein from Staphylococcus aureus (strain USA300).